An 80-amino-acid polypeptide reads, in one-letter code: Pre-core protein X (80 aa).

Residues 2–32 (ALTCRLRFPVPGFRGRMHRRRGMAGHGLTGG) constitute a propeptide that is removed on maturation. A disordered region spans residues 18–45 (MHRRRGMAGHGLTGGMRRAHHRRRRASH). The span at 34-45 (RRAHHRRRRASH) shows a compositional bias: basic residues. A propeptide spanning residues 52-80 (ILPLLIPLIAAAIGAVPGIASVALQAQRH) is cleaved from the precursor.

It belongs to the adenoviridae core protein X family. As to quaternary structure, interacts with the core-capsid bridging protein; this interaction bridges the virus core to the capsid. Cleaved by the viral protease during virion maturation to form the mature protein.

It localises to the host nucleus. The protein localises to the host nucleolus. It is found in the virion. Its function is as follows. Interacts with the viral DNA and aids in tightly condensing it within the capsid. Cleavage of pre-core protein X may serve to partially relax this structure within the mature virion prior to its entry into the nucleus. This is Pre-core protein X from Human adenovirus C serotype 2 (HAdV-2).